Here is a 218-residue protein sequence, read N- to C-terminus: Uracil-DNA glycosylase (218 aa).

The Proton acceptor role is filled by aspartate 59.

It belongs to the uracil-DNA glycosylase (UDG) superfamily. UNG family.

Its subcellular location is the cytoplasm. It carries out the reaction Hydrolyzes single-stranded DNA or mismatched double-stranded DNA and polynucleotides, releasing free uracil.. Excises uracil residues from the DNA which can arise as a result of misincorporation of dUMP residues by DNA polymerase or due to deamination of cytosine. This chain is Uracil-DNA glycosylase, found in Staphylococcus aureus (strain MSSA476).